Here is a 278-residue protein sequence, read N- to C-terminus: HTH-type transcriptional activator RhaS (278 aa).

One can recognise an HTH araC/xylS-type domain in the interval 174 to 272 (NQLMAWLEEH…NWSPRDIRQG (99 aa)). 2 DNA-binding regions (H-T-H motif) span residues 191-212 (EAVA…KQHT) and 239-262 (VTEI…RREF).

As to quaternary structure, binds DNA as a dimer.

The protein resides in the cytoplasm. In terms of biological role, activates expression of the rhaBAD and rhaT operons. The chain is HTH-type transcriptional activator RhaS from Salmonella schwarzengrund (strain CVM19633).